The sequence spans 747 residues: Ubiquitin carboxyl-terminal hydrolase 13 (747 aa).

The 529-residue stretch at 140 to 668 folds into the USP domain; sequence FGYENFGNTC…TAYVLFYKAM (529 aa). C149 functions as the Nucleophile in the catalytic mechanism. 2 disordered regions span residues 172–305 and 318–367; these read PKKS…RPPD and YENP…RKKS. Residues 174–183 show a composition bias toward basic and acidic residues; sequence KSRESDQPRK. S198 bears the Phosphoserine mark. Residues 225-235 show a composition bias toward polar residues; that stretch reads PVNSVNSNTAG. Basic and acidic residues predominate over residues 251 to 260; it reads HVQDNNKKEG. The span at 319–343 shows a compositional bias: polar residues; it reads ENPSRGSSNSNNLDLKGESNSSLST. The active-site Proton acceptor is the H619.

It belongs to the peptidase C19 family.

It catalyses the reaction Thiol-dependent hydrolysis of ester, thioester, amide, peptide and isopeptide bonds formed by the C-terminal Gly of ubiquitin (a 76-residue protein attached to proteins as an intracellular targeting signal).. This Saccharomyces cerevisiae (strain ATCC 204508 / S288c) (Baker's yeast) protein is Ubiquitin carboxyl-terminal hydrolase 13 (UBP13).